The chain runs to 613 residues: tRNA 5-methylaminomethyl-2-thiouridine biosynthesis bifunctional protein MnmC (613 aa).

The tract at residues 1-225 (MKKAKLIFKD…KREMIKAYLE (225 aa)) is tRNA (mnm(5)s(2)U34)-methyltransferase. An FAD-dependent cmnm(5)s(2)U34 oxidoreductase region spans residues 252 to 613 (IGAGISSAVL…FLIRKLKKGL (362 aa)).

The protein in the N-terminal section; belongs to the methyltransferase superfamily. tRNA (mnm(5)s(2)U34)-methyltransferase family. In the C-terminal section; belongs to the DAO family. FAD serves as cofactor.

It localises to the cytoplasm. It catalyses the reaction 5-aminomethyl-2-thiouridine(34) in tRNA + S-adenosyl-L-methionine = 5-methylaminomethyl-2-thiouridine(34) in tRNA + S-adenosyl-L-homocysteine + H(+). In terms of biological role, catalyzes the last two steps in the biosynthesis of 5-methylaminomethyl-2-thiouridine (mnm(5)s(2)U) at the wobble position (U34) in tRNA. Catalyzes the FAD-dependent demodification of cmnm(5)s(2)U34 to nm(5)s(2)U34, followed by the transfer of a methyl group from S-adenosyl-L-methionine to nm(5)s(2)U34, to form mnm(5)s(2)U34. In Campylobacter jejuni subsp. jejuni serotype O:2 (strain ATCC 700819 / NCTC 11168), this protein is tRNA 5-methylaminomethyl-2-thiouridine biosynthesis bifunctional protein MnmC.